Consider the following 344-residue polypeptide: Heat-inducible transcription repressor HrcA (344 aa).

Belongs to the HrcA family.

Functionally, negative regulator of class I heat shock genes (grpE-dnaK-dnaJ and groELS operons). Prevents heat-shock induction of these operons. The protein is Heat-inducible transcription repressor HrcA of Aster yellows witches'-broom phytoplasma (strain AYWB).